The chain runs to 411 residues: Adenylosuccinate synthetase (411 aa).

GTP contacts are provided by residues 11-17 (GDEGKGK) and 39-41 (GHT). The Proton acceptor role is filled by Asp-12. The Mg(2+) site is built by Asp-12 and Gly-39. IMP-binding positions include 12–15 (DEGK), 37–40 (NAGH), Thr-121, Arg-135, Gln-215, Thr-230, and Arg-294. The Proton donor role is filled by His-40. 290 to 296 (TTTKRPR) is a binding site for substrate. GTP is bound by residues Arg-296, 322-324 (KLD), and 400-402 (STS).

This sequence belongs to the adenylosuccinate synthetase family. In terms of assembly, homodimer. Mg(2+) serves as cofactor.

The protein localises to the cytoplasm. It catalyses the reaction IMP + L-aspartate + GTP = N(6)-(1,2-dicarboxyethyl)-AMP + GDP + phosphate + 2 H(+). It functions in the pathway purine metabolism; AMP biosynthesis via de novo pathway; AMP from IMP: step 1/2. Its function is as follows. Plays an important role in the de novo pathway of purine nucleotide biosynthesis. Catalyzes the first committed step in the biosynthesis of AMP from IMP. The protein is Adenylosuccinate synthetase of Helicobacter pylori (strain ATCC 700392 / 26695) (Campylobacter pylori).